Reading from the N-terminus, the 99-residue chain is Acylphosphatase (99 aa).

The Acylphosphatase-like domain occupies 5–97; it reads VRQVMIRGRV…RPGERFSQLP (93 aa). Active-site residues include Arg20 and Asn38.

This sequence belongs to the acylphosphatase family.

The catalysed reaction is an acyl phosphate + H2O = a carboxylate + phosphate + H(+). This Nitrobacter winogradskyi (strain ATCC 25391 / DSM 10237 / CIP 104748 / NCIMB 11846 / Nb-255) protein is Acylphosphatase (acyP).